We begin with the raw amino-acid sequence, 884 residues long: Alanine--tRNA ligase (884 aa).

Residues H572, H576, C673, and H677 each contribute to the Zn(2+) site.

Belongs to the class-II aminoacyl-tRNA synthetase family. Zn(2+) serves as cofactor.

Its subcellular location is the cytoplasm. It carries out the reaction tRNA(Ala) + L-alanine + ATP = L-alanyl-tRNA(Ala) + AMP + diphosphate. Functionally, catalyzes the attachment of alanine to tRNA(Ala) in a two-step reaction: alanine is first activated by ATP to form Ala-AMP and then transferred to the acceptor end of tRNA(Ala). Also edits incorrectly charged Ser-tRNA(Ala) and Gly-tRNA(Ala) via its editing domain. The protein is Alanine--tRNA ligase of Xylella fastidiosa (strain M23).